A 504-amino-acid polypeptide reads, in one-letter code: Topoisomerase I damage affected protein 11 (504 aa).

The tract at residues 32–62 (RKTGRKIRSASSNGYRLEHHRTSSAGSMHSQ) is disordered. The stretch at 179–231 (ALLQSLATKELELLECKQKIEDLKKQTQHEEQNYTRRARELHELKEQVSKHLD) forms a coiled coil. Threonine 236 carries the post-translational modification Phosphothreonine. A phosphoserine mark is found at serine 244 and serine 286. Disordered stretches follow at residues 252–306 (LESR…SKQS), 332–377 (WDDS…SVSR), and 400–504 (DVIT…MTDF). Positions 257 to 287 (ENAGNSSLPSSVSKPKNMGHQSTNQSRSVSP) are enriched in polar residues. The span at 290-301 (IQERRQRDDSSD) shows a compositional bias: basic and acidic residues. Polar residues-rich tracts occupy residues 332-359 (WDDS…QQYD) and 368-377 (KSPSQGSVSR). Basic and acidic residues predominate over residues 403 to 421 (TDNRCDPVYKSDRQHEQKK). The span at 470–479 (TREKKSKRSS) shows a compositional bias: basic residues. A compositionally biased stretch (polar residues) spans 491-504 (DNSSVKNSVEMTDF).

It belongs to the TDA11 family.

The protein localises to the cytoplasm. The sequence is that of Topoisomerase I damage affected protein 11 (TDA11) from Saccharomyces cerevisiae (strain ATCC 204508 / S288c) (Baker's yeast).